The chain runs to 224 residues: Adenylate kinase (224 aa).

10–15 (GSGKGT) lines the ATP pocket. An NMP region spans residues 30 to 59 (ESGAIFRENISKGTELGAKAKEYIDRGDLV). Residues Ser-31, Arg-36, 57 to 59 (DLV), 85 to 88 (GFPR), and Gln-92 each bind AMP. Positions 126–165 (GRRLCVNDNNHPNNIFIDAIKPDGDKCRVCGGELKTRSDD) are LID. Arg-127 lines the ATP pocket. Residues Arg-162 and Arg-174 each coordinate AMP. ATP is bound at residue Pro-211.

It belongs to the adenylate kinase family. As to quaternary structure, monomer.

It localises to the cytoplasm. The enzyme catalyses AMP + ATP = 2 ADP. The protein operates within purine metabolism; AMP biosynthesis via salvage pathway; AMP from ADP: step 1/1. In terms of biological role, catalyzes the reversible transfer of the terminal phosphate group between ATP and AMP. Plays an important role in cellular energy homeostasis and in adenine nucleotide metabolism. This chain is Adenylate kinase, found in Desulfosudis oleivorans (strain DSM 6200 / JCM 39069 / Hxd3) (Desulfococcus oleovorans).